Consider the following 344-residue polypeptide: S-methyl-5'-thioadenosine phosphorylase (344 aa).

Phosphate-binding positions include threonine 51, 99 to 100 (RH), and 132 to 133 (SA). Position 234 (methionine 234) interacts with substrate. Serine 235 contacts phosphate. Residue 258-260 (DYD) coordinates substrate.

The protein belongs to the PNP/MTAP phosphorylase family. MTAP subfamily. As to quaternary structure, homotrimer.

It is found in the cytoplasm. The protein resides in the nucleus. The catalysed reaction is S-methyl-5'-thioadenosine + phosphate = 5-(methylsulfanyl)-alpha-D-ribose 1-phosphate + adenine. It participates in amino-acid biosynthesis; L-methionine biosynthesis via salvage pathway; S-methyl-5-thio-alpha-D-ribose 1-phosphate from S-methyl-5'-thioadenosine (phosphorylase route): step 1/1. Functionally, catalyzes the reversible phosphorylation of S-methyl-5'-thioadenosine (MTA) to adenine and 5-methylthioribose-1-phosphate. Involved in the breakdown of MTA, a major by-product of polyamine biosynthesis. Responsible for the first step in the methionine salvage pathway after MTA has been generated from S-adenosylmethionine. Has broad substrate specificity with 6-aminopurine nucleosides as preferred substrates. This chain is S-methyl-5'-thioadenosine phosphorylase, found in Phaeosphaeria nodorum (strain SN15 / ATCC MYA-4574 / FGSC 10173) (Glume blotch fungus).